Here is a 128-residue protein sequence, read N- to C-terminus: Glycine cleavage system H protein (128 aa).

The Lipoyl-binding domain maps to 25 to 107; sequence IITVGITHHA…YGAGWFFKLK (83 aa). K66 is subject to N6-lipoyllysine.

Belongs to the GcvH family. In terms of assembly, the glycine cleavage system is composed of four proteins: P, T, L and H. The cofactor is (R)-lipoate.

Its function is as follows. The glycine cleavage system catalyzes the degradation of glycine. The H protein shuttles the methylamine group of glycine from the P protein to the T protein. The chain is Glycine cleavage system H protein from Neisseria meningitidis serogroup A / serotype 4A (strain DSM 15465 / Z2491).